We begin with the raw amino-acid sequence, 491 residues long: Glutamate--tRNA ligase (491 aa).

The 'HIGH' region motif lies at 13–23; it reads PSPTGFLHIGN. Zn(2+) is bound by residues cysteine 110, cysteine 112, cysteine 137, and histidine 139. A 'KMSKS' region motif is present at residues 254–258; the sequence is KLSKR. Lysine 257 lines the ATP pocket.

The protein belongs to the class-I aminoacyl-tRNA synthetase family. Glutamate--tRNA ligase type 1 subfamily. Monomer. Zn(2+) is required as a cofactor.

Its subcellular location is the cytoplasm. The catalysed reaction is tRNA(Glu) + L-glutamate + ATP = L-glutamyl-tRNA(Glu) + AMP + diphosphate. In terms of biological role, catalyzes the attachment of glutamate to tRNA(Glu) in a two-step reaction: glutamate is first activated by ATP to form Glu-AMP and then transferred to the acceptor end of tRNA(Glu). This is Glutamate--tRNA ligase from Listeria welshimeri serovar 6b (strain ATCC 35897 / DSM 20650 / CCUG 15529 / CIP 8149 / NCTC 11857 / SLCC 5334 / V8).